Here is a 284-residue protein sequence, read N- to C-terminus: 2-dehydro-3-deoxyphosphooctonate aldolase (284 aa).

The protein belongs to the KdsA family.

The protein resides in the cytoplasm. It catalyses the reaction D-arabinose 5-phosphate + phosphoenolpyruvate + H2O = 3-deoxy-alpha-D-manno-2-octulosonate-8-phosphate + phosphate. Its pathway is carbohydrate biosynthesis; 3-deoxy-D-manno-octulosonate biosynthesis; 3-deoxy-D-manno-octulosonate from D-ribulose 5-phosphate: step 2/3. It functions in the pathway bacterial outer membrane biogenesis; lipopolysaccharide biosynthesis. The polypeptide is 2-dehydro-3-deoxyphosphooctonate aldolase (kdsA) (Haemophilus influenzae (strain ATCC 51907 / DSM 11121 / KW20 / Rd)).